The primary structure comprises 334 residues: TPR repeat-containing protein YsoA (334 aa).

TPR repeat units follow at residues 17–50, 52–84, and 195–230; these read KDRL…DDTE, DLHL…GYGH, and HPII…EPSE.

In Bacillus subtilis (strain 168), this protein is TPR repeat-containing protein YsoA (ysoA).